We begin with the raw amino-acid sequence, 1882 residues long: uncharacterized protein (1882 aa).

The chain crosses the membrane as a helical span at residues 16 to 36; sequence FFLLFGIIFVLFSIIFLETSI. Disordered stretches follow at residues 103–129, 220–306, 492–513, and 658–698; these read DFGS…DVND, FPGD…ESET, VALA…VKDP, and QTDE…TKST. Residues 221-239 show a composition bias toward basic and acidic residues; it reads PGDKGKGEDKKTTKKKSEI. Over residues 240–249 the composition is skewed to polar residues; the sequence is KQASSATTVL. Composition is skewed to basic and acidic residues over residues 259–275, 284–294, and 500–511; these read TDAK…KDSN, NKDKVWFKSDE, and DKQESSADDGVK. The segment covering 667-698 has biased composition (low complexity); sequence AKTTQGTTDSLTQLADASSSSSSSSTGDTKST. The next 4 helical transmembrane spans lie at 987-1007, 1037-1057, 1080-1100, and 1154-1174; these read ASVV…ILLI, VFAG…AFLL, WISF…ISWI, and LFTY…AGTI. 2 disordered regions span residues 1233-1253 and 1572-1598; these read DQIQ…EHPY and KDGQ…TSST. A compositionally biased stretch (low complexity) spans 1234 to 1245; sequence QIQQQQQQQQQQ. Positions 1583–1594 are enriched in gly residues; the sequence is TSSGGGSCGGGS. 4 helical membrane passes run 1759–1779, 1807–1827, 1828–1848, and 1851–1871; these read FLLG…GISM, FFIP…AGLL, VGVQ…VFEF, and YMVG…YFWI.

This sequence belongs to the ABC-4 integral membrane protein family.

It is found in the cell membrane. This is an uncharacterized protein from Mycoplasma pneumoniae (strain ATCC 29342 / M129 / Subtype 1) (Mycoplasmoides pneumoniae).